Reading from the N-terminus, the 126-residue chain is Protein ApaG (126 aa).

The region spanning 2–126 (NQRLSPIKVE…FSLAVPGLLH (125 aa)) is the ApaG domain.

The protein is Protein ApaG of Shewanella piezotolerans (strain WP3 / JCM 13877).